A 1148-amino-acid chain; its full sequence is Minor outer capsid protein P2 (1148 aa).

The region spanning 929–1148 (ENNAANFFER…LYIQSIYDAL (220 aa)) is the PPPDE domain. Residues H953 and C1111 contribute to the active site.

It belongs to the phytoreovirus minor outer capsid protein P2 family. As to quaternary structure, interacts with host ent-kaurene oxidases OSKO1, OSKO2, OSKOL4 and OSKOL5; this interaction.

The protein localises to the virion. Its subcellular location is the host cytoplasm. Functionally, minor capsid protein present in the outer capsid, which is required for adsorption of the virus onto host insect cells (Potential). Could play a role in the host plant virus induced dwarfism. In Rice dwarf virus (isolate O) (RDV), this protein is Minor outer capsid protein P2.